A 610-amino-acid chain; its full sequence is Pyruvate decarboxylase 1 (610 aa).

Substrate is bound by residues Asp-72 and His-159. The segment at 437-519 is thiamine pyrophosphate binding; the sequence is DSWFNCQKLR…FLINNGGYTI (83 aa). Residues Asp-487, Asn-514, and Gly-516 each contribute to the Mg(2+) site. Glu-520 provides a ligand contact to substrate.

Belongs to the TPP enzyme family. In terms of assembly, homotetramer. A metal cation is required as a cofactor. It depends on thiamine diphosphate as a cofactor.

It carries out the reaction a 2-oxocarboxylate + H(+) = an aldehyde + CO2. This chain is Pyruvate decarboxylase 1 (PDC1), found in Zea mays (Maize).